Reading from the N-terminus, the 430-residue chain is Glutamate-1-semialdehyde 2,1-aminomutase (430 aa).

Residue Lys-265 is modified to N6-(pyridoxal phosphate)lysine.

Belongs to the class-III pyridoxal-phosphate-dependent aminotransferase family. HemL subfamily. As to quaternary structure, homodimer. It depends on pyridoxal 5'-phosphate as a cofactor.

It is found in the cytoplasm. The catalysed reaction is (S)-4-amino-5-oxopentanoate = 5-aminolevulinate. It functions in the pathway porphyrin-containing compound metabolism; protoporphyrin-IX biosynthesis; 5-aminolevulinate from L-glutamyl-tRNA(Glu): step 2/2. The polypeptide is Glutamate-1-semialdehyde 2,1-aminomutase (Shewanella putrefaciens (strain CN-32 / ATCC BAA-453)).